The sequence spans 504 residues: Cytochrome P450 monooxygenase gsfF (504 aa).

An N-terminal signal peptide occupies residues 1–16 (MTVLFILSAGLVAVFG). Residues asparagine 97 and asparagine 150 are each glycosylated (N-linked (GlcNAc...) asparagine). Cysteine 450 is a binding site for heme.

The protein belongs to the cytochrome P450 family. Heme is required as a cofactor.

It catalyses the reaction griseophenone B + reduced [NADPH--hemoprotein reductase] + O2 + H(+) = desmethyl-dehydrogriseofulvin + oxidized [NADPH--hemoprotein reductase] + 2 H2O. Its pathway is secondary metabolite biosynthesis; terpenoid biosynthesis. Its function is as follows. Cytochrome P450 monooxygenase; part of the gene cluster that mediates the biosynthesis of griseofulvin, an important antifungal drug that has been in use for a long time for treating dermatophyte infections. The first step of the pathway is the formation of the heptaketide backbone by gsfA which is initiated by priming with acetyl-CoA, followed by sequential condensations of 6 malonyl-CoA units. The resulting benzophenone can undergo a spontaneous dehydration to form norlichexanthone. However, the true precursor for the griseofulvin biosynthesis is not norlichexanthone, but the heptaketide benzophenone that is O-methylated at 3-OH by gsfB to produce griseophenone D which is further methylated at 9-OH by gsfC to yield griseophenone C. Griseophenone C is then substrate of halogenase gsfI which is responsible for the regio-specific chlorination at the C13 position to form griseophenone B. The cytochrome P450 gsfF catalyzes the coupling of orcinol and phloroglucinol rings in griseophenone B to form desmethyl-dehydrogriseofulvin A which is further methylated at 5-OH by gsfD to yield dehydrogriseofulvin. Finally, gsfE performs stereospecific reduction of enone 18 of dehydrogriseofulvin to afford the final product griseofulvin. This is Cytochrome P450 monooxygenase gsfF from Penicillium aethiopicum.